Reading from the N-terminus, the 134-residue chain is Small ribosomal subunit protein uS9 (134 aa).

A disordered region spans residues 114 to 134; it reads EVERKKYGLKKARRAPQFSKR. Residues 120–134 are compositionally biased toward basic residues; the sequence is YGLKKARRAPQFSKR.

Belongs to the universal ribosomal protein uS9 family.

This chain is Small ribosomal subunit protein uS9, found in Thermotoga sp. (strain RQ2).